Reading from the N-terminus, the 205-residue chain is Protein phosphatase inhibitor 2 (205 aa).

The interval 1–44 (MAASTASHRPIKGILKNKTSTTSSMVASAEQPRGNVDEELSKKS) is disordered. Position 2 is an N-acetylalanine (Ala2). Required for binding PPP1CC regions lie at residues 12–17 (KGILKN) and 43–55 (KSQK…ILAT). Polar residues predominate over residues 17–26 (NKTSTTSSMV). Positions 35 to 44 (NVDEELSKKS) are enriched in basic and acidic residues. Residue Ser44 is modified to Phosphoserine; by ATM. Thr73 carries the post-translational modification Phosphothreonine; by GSK3. Residue Ser87 is modified to Phosphoserine. Phosphothreonine is present on residues Thr89 and Thr92. The tract at residues 111–142 (EPKYRIQEQESSGEEDSDLSPEEREKKRQFEM) is disordered. A phosphoserine mark is found at Ser121, Ser122, Ser127, and Ser130. Residues 121–130 (SSGEEDSDLS) are compositionally biased toward acidic residues. Positions 131–142 (PEEREKKRQFEM) are enriched in basic and acidic residues. The interval 147–150 (HYNE) is required for binding PPP1CC catalytic center, displacing metal ions and inhibition of PPP1CC catalytic activity. The interval 163–205 (KDLHDDDEDEEMLETADGESMNTEESNQGSTPSDQQQNKLRSS) is disordered. Acidic residues predominate over residues 167–179 (DDDEDEEMLETAD). The span at 182–205 (SMNTEESNQGSTPSDQQQNKLRSS) shows a compositional bias: polar residues.

This sequence belongs to the protein phosphatase inhibitor 2 family. In terms of assembly, heterodimer with PP1. In terms of processing, phosphorylation on Thr-73 by GSK3 activates PP1 by dissociating the PP1-PPP1R2 complex. Phosphorylation on Ser-44 by ATM activates PP1 by dissociating the PP1-PPP1R2 complex.

Inhibitor of protein-phosphatase 1. The protein is Protein phosphatase inhibitor 2 (PPP1R2) of Homo sapiens (Human).